The sequence spans 311 residues: 33 kDa chaperonin (311 aa).

2 disulfides stabilise this stretch: C240–C242 and C273–C276.

Belongs to the HSP33 family. Post-translationally, under oxidizing conditions two disulfide bonds are formed involving the reactive cysteines. Under reducing conditions zinc is bound to the reactive cysteines and the protein is inactive.

The protein resides in the cytoplasm. Its function is as follows. Redox regulated molecular chaperone. Protects both thermally unfolding and oxidatively damaged proteins from irreversible aggregation. Plays an important role in the bacterial defense system toward oxidative stress. The protein is 33 kDa chaperonin of Trichodesmium erythraeum (strain IMS101).